The chain runs to 255 residues: tRNA (guanine-N(1)-)-methyltransferase (255 aa).

S-adenosyl-L-methionine contacts are provided by residues G113 and I133 to L138.

It belongs to the RNA methyltransferase TrmD family. As to quaternary structure, homodimer.

It localises to the cytoplasm. It catalyses the reaction guanosine(37) in tRNA + S-adenosyl-L-methionine = N(1)-methylguanosine(37) in tRNA + S-adenosyl-L-homocysteine + H(+). Specifically methylates guanosine-37 in various tRNAs. This Chloroflexus aggregans (strain MD-66 / DSM 9485) protein is tRNA (guanine-N(1)-)-methyltransferase.